Consider the following 199-residue polypeptide: NADH-quinone oxidoreductase subunit C (199 aa).

It belongs to the complex I 30 kDa subunit family. NDH-1 is composed of 14 different subunits. Subunits NuoB, C, D, E, F, and G constitute the peripheral sector of the complex.

Its subcellular location is the cell inner membrane. It catalyses the reaction a quinone + NADH + 5 H(+)(in) = a quinol + NAD(+) + 4 H(+)(out). Functionally, NDH-1 shuttles electrons from NADH, via FMN and iron-sulfur (Fe-S) centers, to quinones in the respiratory chain. The immediate electron acceptor for the enzyme in this species is believed to be ubiquinone. Couples the redox reaction to proton translocation (for every two electrons transferred, four hydrogen ions are translocated across the cytoplasmic membrane), and thus conserves the redox energy in a proton gradient. The protein is NADH-quinone oxidoreductase subunit C of Leptothrix cholodnii (strain ATCC 51168 / LMG 8142 / SP-6) (Leptothrix discophora (strain SP-6)).